The chain runs to 92 residues: Small ribosomal subunit protein uS19 (92 aa).

Belongs to the universal ribosomal protein uS19 family.

Functionally, protein S19 forms a complex with S13 that binds strongly to the 16S ribosomal RNA. The chain is Small ribosomal subunit protein uS19 from Bacillus licheniformis (strain ATCC 14580 / DSM 13 / JCM 2505 / CCUG 7422 / NBRC 12200 / NCIMB 9375 / NCTC 10341 / NRRL NRS-1264 / Gibson 46).